The primary structure comprises 138 residues: Fusaristatin A biosynthesis cluster protein FGSG_08206 (138 aa).

One can recognise a Stress-response A/B barrel domain in the interval 33–130; the sequence is VHRVTMFKMP…TIDGMMTVFF (98 aa).

It participates in secondary metabolite biosynthesis. Functionally, part of the gene cluster that mediates the biosynthesis of the lipopeptide fusaristatin A. Fusaristatin A consists of a polyketide chain linked to three amino acid residues glutamine (Gln), dehydroalanine (dehydro-Ala), and beta-aminoisobutyric acid. The biosynthesis starts with formation of a linear polyketide chain by the highly reducing polyketide synthase PKS6. The gene cluster does not contain an acyl-CoA ligase or an acyl-transferase, and it is therefore predicted that the polyketide is transferred directly to the nonribosomal peptide synthetase NRPS7. Modules 1-3 from NRPS7 incorporate dehydro-Ala, Gln, and beta-aminoisobutyric acid in the compound, which is released by cyclization. The beta-aminoisobutyric acid units are most likely not freely available to the NRPS, but can be synthesized from thymine, which requires a dehydrogenase, a monooxygenase, and an aminotransferase. The fusaristatin A cluster contains a cytochrome P450 monooxygenase (FGSG_08207) and an aminotransferase (FGSG_17085), which theoretically can perform two of the enzymatic steps. The enzymes may however also be involved in biosynthesis of dehydroalanine or modification of the polyketide. The dehydro-Ala residue can be a result of cyclization, where serine is dehydrated. The last gene of the cluster encodes a protein with an A/B barrel domain found in variable enzymes, which hampers functional prediction. This Gibberella zeae (strain ATCC MYA-4620 / CBS 123657 / FGSC 9075 / NRRL 31084 / PH-1) (Wheat head blight fungus) protein is Fusaristatin A biosynthesis cluster protein FGSG_08206.